The following is a 585-amino-acid chain: MEPIVEQLKSRFDKALITAFGQDLVGTDPMIVSTTNPKFGDYQCNVAMSLAKKLKDKPKAIATQIINNLNINDYFYPPEIAGPGFINLSLKPEYIENCLETIIKDEKLNISPTKNPQRVVIDFSSPNIAKEMHVGHLRSTIIGDSLARVLEFQGHNVLRLNHVGDWGTQFGMLISYLREAFPEALKTADILDIGDLVAFYKQSKKRFDEDQDFQEKSRQEVVNLQTGAEDSRHAWELLCNQSRREFQVIYDLLDIKLNERGESFYNSMLPGIVEELNRLGLLEESDGAQCVFLSGFTNKEGEDVPLIVKKSDGGYNYATTDLAALVHRIEKEGATRLIYVTDAGQANHFSQVWQVAKKAGWIPENVEIVNVFFGLVLGEDGKKLKTRSGETVRLIDLLDEAINKARNDLEKRLKDEKRLESEEFIKNVAQVVGLSAVKYADLSQNRKSNYVFSFDKMLALQGNTAPYLLYAYVRVQGISRKGEINFEKLRKDAKIILQDEPELVLGKHLLKLNEVLNIVTIELLPNRLCEYLYELSEKFNKFFENCPVLKSEEPLRTSRLLLCDLTARTLKLGLYLLGISVLERM.

The 'HIGH' region signature appears at 126 to 136; sequence PNIAKEMHVGH.

This sequence belongs to the class-I aminoacyl-tRNA synthetase family. In terms of assembly, monomer.

The protein resides in the cytoplasm. It catalyses the reaction tRNA(Arg) + L-arginine + ATP = L-arginyl-tRNA(Arg) + AMP + diphosphate. In Trichodesmium erythraeum (strain IMS101), this protein is Arginine--tRNA ligase.